The chain runs to 234 residues: Protein rgg8 (234 aa).

It is found in the cytoplasm. Its subcellular location is the nucleus. The chain is Protein rgg8 (rgg8) from Schizosaccharomyces pombe (strain 972 / ATCC 24843) (Fission yeast).